The chain runs to 494 residues: Ketol-acid reductoisomerase (NADP(+)) (494 aa).

The KARI N-terminal Rossmann domain occupies 14-208 (LDQLGRCRFM…GGHRAGCLES (195 aa)). NADP(+) is bound by residues 45-48 (CGAQ), arginine 68, arginine 76, serine 78, and 108-110 (DKQ). Residue histidine 132 is part of the active site. Residue glycine 158 coordinates NADP(+). KARI C-terminal knotted domains follow at residues 209 to 344 (SFVA…NYPA) and 345 to 487 (SDVE…MSDM). Mg(2+)-binding residues include aspartate 217, glutamate 221, glutamate 389, and glutamate 393. Residue serine 414 coordinates substrate.

Belongs to the ketol-acid reductoisomerase family. The cofactor is Mg(2+).

It catalyses the reaction (2R)-2,3-dihydroxy-3-methylbutanoate + NADP(+) = (2S)-2-acetolactate + NADPH + H(+). The catalysed reaction is (2R,3R)-2,3-dihydroxy-3-methylpentanoate + NADP(+) = (S)-2-ethyl-2-hydroxy-3-oxobutanoate + NADPH + H(+). The protein operates within amino-acid biosynthesis; L-isoleucine biosynthesis; L-isoleucine from 2-oxobutanoate: step 2/4. Its pathway is amino-acid biosynthesis; L-valine biosynthesis; L-valine from pyruvate: step 2/4. Its function is as follows. Involved in the biosynthesis of branched-chain amino acids (BCAA). Catalyzes an alkyl-migration followed by a ketol-acid reduction of (S)-2-acetolactate (S2AL) to yield (R)-2,3-dihydroxy-isovalerate. In the isomerase reaction, S2AL is rearranged via a Mg-dependent methyl migration to produce 3-hydroxy-3-methyl-2-ketobutyrate (HMKB). In the reductase reaction, this 2-ketoacid undergoes a metal-dependent reduction by NADPH to yield (R)-2,3-dihydroxy-isovalerate. The chain is Ketol-acid reductoisomerase (NADP(+)) from Vibrio atlanticus (strain LGP32) (Vibrio splendidus (strain Mel32)).